Here is a 156-residue protein sequence, read N- to C-terminus: Beta-defensin 125 (156 aa).

An N-terminal signal peptide occupies residues 1-20 (MNILMLTFIICGLLTRVTKG). Cystine bridges form between Cys-27/Cys-55, Cys-35/Cys-49, and Cys-39/Cys-56. Residues 68-156 (PAFPVIHLED…PPSQTALTHN (89 aa)) constitute a propeptide that is removed on maturation. Residues 108–156 (GETMTPETNTPETTMPPSEATTPETTMPPSETATSETMPPPSQTALTHN) form a disordered region. Positions 109–144 (ETMTPETNTPETTMPPSEATTPETTMPPSETATSET) are enriched in low complexity.

Belongs to the beta-defensin family.

It localises to the secreted. Has antibacterial activity. This chain is Beta-defensin 125 (DEFB125), found in Homo sapiens (Human).